The following is a 511-amino-acid chain: Glucans biosynthesis protein G (511 aa).

The signal sequence occupies residues methionine 1–alanine 22.

This sequence belongs to the OpgD/OpgG family.

The protein localises to the periplasm. Its pathway is glycan metabolism; osmoregulated periplasmic glucan (OPG) biosynthesis. In terms of biological role, involved in the biosynthesis of osmoregulated periplasmic glucans (OPGs). The sequence is that of Glucans biosynthesis protein G from Salmonella paratyphi A (strain ATCC 9150 / SARB42).